Reading from the N-terminus, the 265-residue chain is Beta-lactamase SHV-4 (265 aa).

Ser-45 acts as the Acyl-ester intermediate in catalysis. The cysteines at positions 52 and 98 are disulfide-linked. Glu-143 acts as the Proton acceptor in catalysis. 209–211 (KTG) lines the substrate pocket.

It belongs to the class-A beta-lactamase family.

The catalysed reaction is a beta-lactam + H2O = a substituted beta-amino acid. Functionally, SHV enzymes hydrolyze broad spectrum cephalosporins notably cefotaxime and ceftazidime. SHV-4 causes particularly high levels of resistance to aztreonam and ceftazidime. In Klebsiella pneumoniae, this protein is Beta-lactamase SHV-4 (bla).